A 363-amino-acid polypeptide reads, in one-letter code: Phosphatidylinositol transfer protein sfh-5 (363 aa).

The disordered stretch occupies residues Met-1–Ser-84. The segment covering Asp-36–Lys-46 has biased composition (basic and acidic residues). Over residues Lys-64–Pro-76 the composition is skewed to low complexity. One can recognise a CRAL-TRIO domain in the interval Ala-180 to Lys-354. 5 residues coordinate heme: Tyr-200, Arg-220, His-253, Tyr-255, and Lys-289.

Belongs to the SFH5 family. The cofactor is heme b.

The protein resides in the cytoplasm. The protein localises to the endoplasmic reticulum membrane. Its subcellular location is the microsome membrane. The enzyme catalyses a 1,2-diacyl-sn-glycero-3-phospho-(1D-myo-inositol)(in) = a 1,2-diacyl-sn-glycero-3-phospho-(1D-myo-inositol)(out). In terms of biological role, non-classical phosphatidylinositol (PtdIns) transfer protein (PITP), which exhibits PtdIns-binding/transfer activity in the absence of detectable PtdCho-binding/transfer activity. Regulates PtdIns(4,5)P2 homeostasis at the plasma membrane. Heme-binding protein that may play a role in organic oxidant-induced stress responses. The chain is Phosphatidylinositol transfer protein sfh-5 (sfh-5) from Neurospora crassa (strain ATCC 24698 / 74-OR23-1A / CBS 708.71 / DSM 1257 / FGSC 987).